We begin with the raw amino-acid sequence, 85 residues long: Beta-toxin BmKAS (85 aa).

The signal sequence occupies residues 1–19; sequence MKTVIFLIVSSLLLIGVKT. In terms of domain architecture, LCN-type CS-alpha/beta spans 20 to 82; it reads DNGYLLDKYT…LWNYNTNKCN (63 aa). Disulfide bonds link Cys-31/Cys-81, Cys-35/Cys-56, Cys-42/Cys-63, and Cys-46/Cys-65.

As to expression, expressed by the venom gland.

Its subcellular location is the secreted. Functionally, beta toxins bind voltage-independently at site-4 of sodium channels (Nav) and shift the voltage of activation toward more negative potentials thereby affecting sodium channel activation and promoting spontaneous and repetitive firing. It binds to distinct receptor sites of mammal and insect voltage-gated sodium channels. It displays antinociceptive effect in rat models, which is due to its specific modulation of sodium channels of sensory neurons. It also significantly stimulates the binding of [3H]-ryanodine to ryanodine receptors on the sarcoplasmic reticulum of the skeletal muscle through an indirect mechanism. And it promotes noradrenaline release from the rat hippocampus slice. The protein is Beta-toxin BmKAS of Olivierus martensii (Manchurian scorpion).